We begin with the raw amino-acid sequence, 108 residues long: DNA-binding protein HBbu (108 aa).

The protein belongs to the bacterial histone-like protein family.

Its function is as follows. Histone-like DNA-binding protein which is capable of wrapping DNA to stabilize it, and thus to prevent its denaturation under extreme environmental conditions. The chain is DNA-binding protein HBbu (hbb) from Borrelia andersonii (Borreliella andersonii).